The chain runs to 664 residues: Protein-arginine deiminase type-3 (664 aa).

It belongs to the protein arginine deiminase family. Ca(2+) is required as a cofactor. Hair follicles, and epidermis at very low levels.

Its subcellular location is the cytoplasm. The catalysed reaction is L-arginyl-[protein] + H2O = L-citrullyl-[protein] + NH4(+). Functionally, catalyzes the deimination of arginine residues of proteins. This Homo sapiens (Human) protein is Protein-arginine deiminase type-3 (PADI3).